A 202-amino-acid polypeptide reads, in one-letter code: Myosin regulatory light chain 10 (202 aa).

A disordered region spans residues 1-21 (MGQSSLDHGVQGPVAGTGDFG). 3 EF-hand domains span residues 60 to 95 (SQIQ…LGRI), 130 to 165 (DPEE…QADR), and 166 to 201 (FSEE…GEEK). Asp73, Asn75, Asp77, and Asp84 together coordinate Ca(2+).

Myosin is a hexamer of 2 heavy chains and 4 light chains. Specifically expressed in precursor B- and T-lymphocytes.

The polypeptide is Myosin regulatory light chain 10 (Myl10) (Mus musculus (Mouse)).